The primary structure comprises 129 residues: Histone H2A-IV (129 aa).

This sequence belongs to the histone H2A family. The nucleosome is a histone octamer containing two molecules each of H2A, H2B, H3 and H4 assembled in one H3-H4 heterotetramer and two H2A-H2B heterodimers. The octamer wraps approximately 147 bp of DNA.

The protein resides in the nucleus. It localises to the chromosome. Its function is as follows. Core component of nucleosome. Nucleosomes wrap and compact DNA into chromatin, limiting DNA accessibility to the cellular machineries which require DNA as a template. Histones thereby play a central role in transcription regulation, DNA repair, DNA replication and chromosomal stability. DNA accessibility is regulated via a complex set of post-translational modifications of histones, also called histone code, and nucleosome remodeling. In Volvox carteri (Green alga), this protein is Histone H2A-IV.